A 312-amino-acid chain; its full sequence is Homoserine O-acetyltransferase (312 aa).

The active-site Acyl-thioester intermediate is the C142. Substrate-binding residues include K163 and S192. H235 acts as the Proton acceptor in catalysis. The active site involves E237. R249 provides a ligand contact to substrate.

It belongs to the MetA family.

Its subcellular location is the cytoplasm. The enzyme catalyses L-homoserine + acetyl-CoA = O-acetyl-L-homoserine + CoA. It participates in amino-acid biosynthesis; L-methionine biosynthesis via de novo pathway; O-acetyl-L-homoserine from L-homoserine: step 1/1. In terms of biological role, transfers an acetyl group from acetyl-CoA to L-homoserine, forming acetyl-L-homoserine. This Chelativorans sp. (strain BNC1) protein is Homoserine O-acetyltransferase.